Consider the following 703-residue polypeptide: Polyribonucleotide nucleotidyltransferase (703 aa).

Positions 488 and 494 each coordinate Mg(2+). The KH domain occupies 555–614; sequence PKIVKMQINPDKIKDVIGPGGKIITKIIDETGVKIDIEQTGEVFISGIEIDMIKKAQELI. Positions 624 to 692 constitute an S1 motif domain; the sequence is GKTYKGKVSR…EKGRVNLSRK (69 aa).

This sequence belongs to the polyribonucleotide nucleotidyltransferase family. Mg(2+) serves as cofactor.

It localises to the cytoplasm. It carries out the reaction RNA(n+1) + phosphate = RNA(n) + a ribonucleoside 5'-diphosphate. In terms of biological role, involved in mRNA degradation. Catalyzes the phosphorolysis of single-stranded polyribonucleotides processively in the 3'- to 5'-direction. The protein is Polyribonucleotide nucleotidyltransferase of Clostridioides difficile (strain 630) (Peptoclostridium difficile).